The following is a 713-amino-acid chain: MMQESATETISNSSMNQNGMSTLSSQLDAGSRDGRSSGDTSSEVSTVELLHLQQQQALQAARQLLLQQQTSGLKSPKSSDKQRPLQVPVSVAMMTPQVITPQQMQQILQQQVLSPQQLQALLQQQQAVMLQQQQLQEFYKKQQEQLHLQLLQQQQQQQQQQQQQQQQQQQQQQQQQQQQQQQQQQQQQQQHPGKQAKEQQQQQQQQQLAAQQLVFQQQLLQMQQLQQQQHLLSLQRQGLISIPPGQAALPVQSLPQAGLSPAEIQQLWKEVTGVHSMEDNGIKHGGLDLTTNNSSSTTSSTTSKASPPITHHSIVNGQSSVLNARRDSSSHEETGASHTLYGHGVCKWPGCESICEDFGQFLKHLNNEHALDDRSTAQCRVQMQVVQQLEIQLSKERERLQAMMTHLHMRPSEPKPSPKPLNLVSSVTMSKNMLETSPQSLPQTPTTPTAPVTPITQGPSVITPASVPNVGAIRRRHSDKYNIPMSSEIAPNYEFYKNADVRPPFTYATLIRQAIMESSDRQLTLNEIYSWFTRTFAYFRRNAATWKNAVRHNLSLHKCFVRVENVKGAVWTVDEVEYQKRRSQKITGSPTLVKNIPTSLGYGAALNASLQAALAESSLPLLSNPGLINNASSGLLQAVHEDLNGSLDHIDSNGNSSPGCSPQPHIHSIHVKEEPVIAEDEDCPMSLVTTANHSPELEDDREIEEEPLSEDLE.

Positions 1–28 are enriched in polar residues; the sequence is MMQESATETISNSSMNQNGMSTLSSQLD. Disordered regions lie at residues 1–45 and 279–337; these read MMQE…SEVS and DNGI…TGAS. A compositionally biased stretch (low complexity) spans 290–303; sequence TTNNSSSTTSSTTS. Polar residues predominate over residues 313-322; sequence SIVNGQSSVL. Over residues 324–335 the composition is skewed to basic and acidic residues; it reads ARRDSSSHEETG. A C2H2-type zinc finger spans residues 344 to 369; it reads GVCKWPGCESICEDFGQFLKHLNNEH. The interval 386–407 is leucine-zipper; the sequence is VQQLEIQLSKERERLQAMMTHL. The segment at 420-424 is CTBP1-binding; sequence PLNLV. Residues 436-457 show a composition bias toward low complexity; sequence TSPQSLPQTPTTPTAPVTPITQ. Residues 436-463 form a disordered region; the sequence is TSPQSLPQTPTTPTAPVTPITQGPSVIT. A DNA-binding region (fork-head) is located at residues 502–592; it reads RPPFTYATLI…SQKITGSPTL (91 aa). 2 disordered regions span residues 647–666 and 676–713; these read LDHI…QPHI and VIAE…EDLE. Acidic residues predominate over residues 697-713; sequence LEDDREIEEEPLSEDLE.

Forms homodimers and heterodimers with FOXP1 and FOXP4. Dimerization is required for DNA-binding. Interacts with CTBP1. Interacts with FOXP1. Interacts with TBR1. Interacts with ZMYM2.

The protein localises to the nucleus. Transcriptional repressor that may play a role in the specification and differentiation of lung epithelium. May also play a role in developing neural, gastrointestinal and cardiovascular tissues. Can act with CTBP1 to synergistically repress transcription but CTPBP1 is not essential. Plays a role in synapse formation by regulating SRPX2 levels. The protein is Forkhead box protein P2 (FOXP2) of Hylobates lar (Lar gibbon).